Consider the following 180-residue polypeptide: Stathmin-3 (180 aa).

One can recognise an SLD domain in the interval 38 to 180; that stretch reads GDMEVKQLDK…NKEQREEISG (143 aa). A compositionally biased stretch (low complexity) spans 60 to 74; it reads SPSDLSPESPILSSP. The disordered stretch occupies residues 60–82; the sequence is SPSDLSPESPILSSPPKKKDLSL. Residues 75-179 adopt a coiled-coil conformation; sequence PKKKDLSLEE…RNKEQREEIS (105 aa).

It belongs to the stathmin family.

The polypeptide is Stathmin-3 (STMN3) (Gallus gallus (Chicken)).